We begin with the raw amino-acid sequence, 201 residues long: Holliday junction branch migration complex subunit RuvA (201 aa).

The domain I stretch occupies residues M1 to Q63. The domain II stretch occupies residues T64–V142. The flexible linker stretch occupies residues A143–S153. Residues S153–K201 are domain III.

It belongs to the RuvA family. As to quaternary structure, homotetramer. Forms an RuvA(8)-RuvB(12)-Holliday junction (HJ) complex. HJ DNA is sandwiched between 2 RuvA tetramers; dsDNA enters through RuvA and exits via RuvB. An RuvB hexamer assembles on each DNA strand where it exits the tetramer. Each RuvB hexamer is contacted by two RuvA subunits (via domain III) on 2 adjacent RuvB subunits; this complex drives branch migration. In the full resolvosome a probable DNA-RuvA(4)-RuvB(12)-RuvC(2) complex forms which resolves the HJ.

It localises to the cytoplasm. In terms of biological role, the RuvA-RuvB-RuvC complex processes Holliday junction (HJ) DNA during genetic recombination and DNA repair, while the RuvA-RuvB complex plays an important role in the rescue of blocked DNA replication forks via replication fork reversal (RFR). RuvA specifically binds to HJ cruciform DNA, conferring on it an open structure. The RuvB hexamer acts as an ATP-dependent pump, pulling dsDNA into and through the RuvAB complex. HJ branch migration allows RuvC to scan DNA until it finds its consensus sequence, where it cleaves and resolves the cruciform DNA. This is Holliday junction branch migration complex subunit RuvA from Listeria monocytogenes serovar 1/2a (strain ATCC BAA-679 / EGD-e).